The following is an 81-amino-acid chain: Probable small nuclear ribonucleoprotein G (81 aa).

In terms of domain architecture, Sm spans 5–76 (GQPPALKKYM…VVTVEALEPV (72 aa)).

This sequence belongs to the snRNP Sm proteins family.

It is found in the nucleus. Probable common Sm protein, is found in U1 and U2 snRNPs and may be part of the spliceosome. In Medicago sativa (Alfalfa), this protein is Probable small nuclear ribonucleoprotein G (C29).